Reading from the N-terminus, the 733-residue chain is Hypermethylated in cancer 1 protein (733 aa).

One can recognise a BTB domain in the interval 47 to 110; sequence CDVIIVVQNA…IYTGRLADGA (64 aa). The interval 154-315 is mediates HDAC-dependent transcriptional repression; it reads KYCHLRGGGG…PFRGGSGSPG (162 aa). Arg-159 carries the omega-N-methylarginine modification. The tract at residues 189–209 is disordered; the sequence is YPSPVGPPPPPAAEPPSGPEA. The segment covering 192–206 has biased composition (pro residues); the sequence is PVGPPPPPAAEPPSG. Ser-237 is subject to Phosphoserine. An interaction with CTBP1 region spans residues 241-247; sequence GLDLSKK. Residues 241–421 are disordered; it reads GLDLSKKSPP…PGGHLEGYPC (181 aa). Ser-248 carries the phosphoserine modification. Residues 284–293 show a composition bias toward pro residues; sequence LALPSLPPLP. N6-acetyllysine; alternate is present on Lys-333. Residue Lys-333 forms a Glycyl lysine isopeptide (Lys-Gly) (interchain with G-Cter in SUMO); alternate linkage. A compositionally biased stretch (basic and acidic residues) spans 344-361; it reads ELGRERGSPSERCEERGG. Ser-366 carries the phosphoserine modification. Positions 368 to 380 are enriched in pro residues; it reads GGPPLGLAPPPRY. 5 C2H2-type zinc fingers span residues 439–459, 509–529, 537–557, 565–585, and 593–613; these read CIPCGKGFPSSEQLNAHVEAH, CASCDKSYKDPATLRQHEKTH, CTICGKKFTQRGTMTRHMRSH, CDACGMRFTRQYRLTEHMRIH, and CQVCGGKFAQQRNLISHMKMH. Ser-704 is modified (phosphoserine).

This sequence belongs to the krueppel C2H2-type zinc-finger protein family. Hic subfamily. As to quaternary structure, self-associates. Interacts with HIC2. Interacts with CTBP1 and CTBP2. Interacts with TCF7L2 and ARID1A. Interacts with MTA1 and MBD3; indicative for an association with the NuRD complex. Interacts with SIRT1. Acetylated on several residues, including Lys-333. Lys-333 is deacetylated by SIRT1. In terms of processing, sumoylated on Lys-333 by a PIAS family member, which enhances interaction with MTA1, positively regulates transcriptional repression activity and is enhanced by HDAC4. As to expression, ubiquitously expressed with highest levels found in lung, colon, prostate, thymus, testis and ovary. Expression is absent or decreased in many tumor cells.

The protein localises to the nucleus. In terms of biological role, transcriptional repressor. Recognizes and binds to the consensus sequence '5-[CG]NG[CG]GGGCA[CA]CC-3'. May act as a tumor suppressor. Involved in development of head, face, limbs and ventral body wall. Involved in down-regulation of SIRT1 and thereby is involved in regulation of p53/TP53-dependent apoptotic DNA-damage responses. The specific target gene promoter association seems to be depend on corepressors, such as CTBP1 or CTBP2 and MTA1. In cooperation with MTA1 (indicative for an association with the NuRD complex) represses transcription from CCND1/cyclin-D1 and CDKN1C/p57Kip2 specifically in quiescent cells. Involved in regulation of the Wnt signaling pathway probably by association with TCF7L2 and preventing TCF7L2 and CTNNB1 association with promoters of TCF-responsive genes. Seems to repress transcription from E2F1 and ATOH1 which involves ARID1A, indicative for the participation of a distinct SWI/SNF-type chromatin-remodeling complex. Probably represses transcription of ACKR3, FGFBP1 and EFNA1. This Homo sapiens (Human) protein is Hypermethylated in cancer 1 protein (HIC1).